Consider the following 475-residue polypeptide: Ankyrin repeat, SAM and basic leucine zipper domain-containing protein 1 (475 aa).

Residues 1-25 are disordered; that stretch reads MAAGALRGLPVAGGGESSESEDDGW. Phosphoserine occurs at positions 17, 18, and 20. ANK repeat units follow at residues 45-74, 78-107, 110-144, 148-177, 181-210, and 214-243; these read EKKE…SVDS, YGWT…NASF, DKQT…DPNV, RLMT…EVNT, NGYT…NKML, and DGKM…PLEG. Positions 272 to 334 constitute an SAM domain; that stretch reads SYTAFGDLEV…KILAALKELQ (63 aa).

In terms of assembly, interacts with DDX4, PIWIL1, RANBP9 and TDRD1.

Its subcellular location is the cytoplasm. In terms of biological role, plays a central role during spermatogenesis by repressing transposable elements and preventing their mobilization, which is essential for the germline integrity. Acts via the piRNA metabolic process, which mediates the repression of transposable elements during meiosis by forming complexes composed of piRNAs and Piwi proteins and governs the methylation and subsequent repression of transposons. Its association with pi-bodies suggests a participation in the primary piRNAs metabolic process. Required prior to the pachytene stage to facilitate the production of multiple types of piRNAs, including those associated with repeats involved in the regulation of retrotransposons. May act by mediating protein-protein interactions during germ cell maturation. This is Ankyrin repeat, SAM and basic leucine zipper domain-containing protein 1 (ASZ1) from Chlorocebus aethiops (Green monkey).